A 729-amino-acid chain; its full sequence is Fatty acid oxidation complex subunit alpha (729 aa).

The interval 1–189 is enoyl-CoA hydratase/isomerase; that stretch reads MLYKGDTLYL…KIGLVDGVVK (189 aa). Aspartate 296 is a substrate binding site. The tract at residues 311–729 is 3-hydroxyacyl-CoA dehydrogenase; that stretch reads ETPKQAAVLG…ARPVGSLKTA (419 aa). Residues methionine 324, aspartate 343, 400-402, lysine 407, and serine 429 each bind NAD(+); that span reads VVE. The For 3-hydroxyacyl-CoA dehydrogenase activity role is filled by histidine 450. NAD(+) is bound at residue asparagine 453. Substrate contacts are provided by asparagine 500 and tyrosine 660. Positions 708 to 729 are disordered; it reads RHNEPYYPPVEPARPVGSLKTA.

The protein in the N-terminal section; belongs to the enoyl-CoA hydratase/isomerase family. This sequence in the C-terminal section; belongs to the 3-hydroxyacyl-CoA dehydrogenase family. As to quaternary structure, heterotetramer of two alpha chains (FadB) and two beta chains (FadA).

It carries out the reaction a (3S)-3-hydroxyacyl-CoA + NAD(+) = a 3-oxoacyl-CoA + NADH + H(+). It catalyses the reaction a (3S)-3-hydroxyacyl-CoA = a (2E)-enoyl-CoA + H2O. The enzyme catalyses a 4-saturated-(3S)-3-hydroxyacyl-CoA = a (3E)-enoyl-CoA + H2O. The catalysed reaction is (3S)-3-hydroxybutanoyl-CoA = (3R)-3-hydroxybutanoyl-CoA. It carries out the reaction a (3Z)-enoyl-CoA = a 4-saturated (2E)-enoyl-CoA. It catalyses the reaction a (3E)-enoyl-CoA = a 4-saturated (2E)-enoyl-CoA. The protein operates within lipid metabolism; fatty acid beta-oxidation. Involved in the aerobic and anaerobic degradation of long-chain fatty acids via beta-oxidation cycle. Catalyzes the formation of 3-oxoacyl-CoA from enoyl-CoA via L-3-hydroxyacyl-CoA. It can also use D-3-hydroxyacyl-CoA and cis-3-enoyl-CoA as substrate. The protein is Fatty acid oxidation complex subunit alpha of Salmonella newport (strain SL254).